We begin with the raw amino-acid sequence, 234 residues long: Adenylate dimethylallyltransferase (234 aa).

It belongs to the isopentenyl transferase family.

It carries out the reaction dimethylallyl diphosphate + AMP = N(6)-(dimethylallyl)adenosine 5'-phosphate + diphosphate. In terms of biological role, transfers dimethylallyl groups to AMP as part of the biosynthesis of cytokinin phytohormones. The protein is Adenylate dimethylallyltransferase (ptz) of Pseudomonas savastanoi (Pseudomonas syringae pv. savastanoi).